A 133-amino-acid polypeptide reads, in one-letter code: Small ribosomal subunit protein uS8 (133 aa).

The protein belongs to the universal ribosomal protein uS8 family. As to quaternary structure, part of the 30S ribosomal subunit.

Its function is as follows. One of the primary rRNA binding proteins, it binds directly to 16S rRNA central domain where it helps coordinate assembly of the platform of the 30S subunit. This chain is Small ribosomal subunit protein uS8, found in Ignicoccus hospitalis (strain KIN4/I / DSM 18386 / JCM 14125).